A 200-amino-acid polypeptide reads, in one-letter code: Exopolysaccharide production protein PSS (200 aa).

This sequence belongs to the bacterial sugar transferase family.

This Rhizobium leguminosarum bv. phaseoli protein is Exopolysaccharide production protein PSS (pss).